We begin with the raw amino-acid sequence, 295 residues long: Calcium-regulated actin-bundling protein (295 aa).

Monomer.

Functionally, may contribute to the structure and reorganization of filopodia and pseudopodia accompanying cell movements. The sequence is that of Calcium-regulated actin-bundling protein (abpB) from Dictyostelium discoideum (Social amoeba).